The chain runs to 853 residues: Aminotransferase PigE (853 aa).

503–504 serves as a coordination point for pyridoxal 5'-phosphate; the sequence is GT. An N6-(pyridoxal phosphate)lysine modification is found at K645. T680 serves as a coordination point for pyridoxal 5'-phosphate.

Belongs to the class-III pyridoxal-phosphate-dependent aminotransferase family. In terms of assembly, homodimer. Requires pyridoxal 5'-phosphate as cofactor.

It functions in the pathway antibiotic biosynthesis; prodigiosin biosynthesis. Its function is as follows. Involved in the biosynthesis of 2-methyl-3-n-amyl-pyrrole (MAP), one of the terminal products involved in the biosynthesis of the red antibiotic prodigiosin (Pig). Catalyzes the transamination to the aldehyde group of 3-acetyloctanal, resulting in an aminoketone, which spontaneously cyclizes to yield the dihydro form of MAP (H2MAP). This is Aminotransferase PigE from Serratia sp. (strain FS14).